Consider the following 242-residue polypeptide: ATP synthase subunit a (242 aa).

The next 6 helical transmembrane spans lie at 29-49 (SSIYMLLATTLSLTYLYLAFY), 84-104 (FIPLVFSLFIFILFCNLLGMT), 114-134 (IIVTFTLALLIFLTVTIVGFI), 140-160 (FLTLFLPHGTPVWLAPLMIVI), 189-209 (VIASFTVSLMIYLKFLPIPLM), and 210-230 (VILIGFEIFIAILQAYIFTIL).

This sequence belongs to the ATPase A chain family. F-type ATPases have 2 components, CF(1) - the catalytic core - and CF(0) - the membrane proton channel. CF(1) has five subunits: alpha(3), beta(3), gamma(1), delta(1), epsilon(1). CF(0) has three main subunits: a(1), b(2) and c(9-12). The alpha and beta chains form an alternating ring which encloses part of the gamma chain. CF(1) is attached to CF(0) by a central stalk formed by the gamma and epsilon chains, while a peripheral stalk is formed by the delta and b chains.

The protein localises to the cell inner membrane. Key component of the proton channel; it plays a direct role in the translocation of protons across the membrane. The protein is ATP synthase subunit a of Rickettsia prowazekii (strain Madrid E).